A 921-amino-acid polypeptide reads, in one-letter code: Protein translocase subunit SecA (921 aa).

ATP contacts are provided by residues Q87, 105 to 109 (GEGKT), and D515. Residues 872–901 (DMEVAGSTGDRGAALDIQPAPVRSGPKIGR) are disordered. Positions 905, 907, 916, and 917 each coordinate Zn(2+).

This sequence belongs to the SecA family. As to quaternary structure, monomer and homodimer. Part of the essential Sec protein translocation apparatus which comprises SecA, SecYEG and auxiliary proteins SecDF-YajC and YidC. It depends on Zn(2+) as a cofactor.

It is found in the cell inner membrane. Its subcellular location is the cytoplasm. The catalysed reaction is ATP + H2O + cellular proteinSide 1 = ADP + phosphate + cellular proteinSide 2.. Functionally, part of the Sec protein translocase complex. Interacts with the SecYEG preprotein conducting channel. Has a central role in coupling the hydrolysis of ATP to the transfer of proteins into and across the cell membrane, serving both as a receptor for the preprotein-SecB complex and as an ATP-driven molecular motor driving the stepwise translocation of polypeptide chains across the membrane. The polypeptide is Protein translocase subunit SecA (Polynucleobacter asymbioticus (strain DSM 18221 / CIP 109841 / QLW-P1DMWA-1) (Polynucleobacter necessarius subsp. asymbioticus)).